The following is a 255-amino-acid chain: Hydroxyacylglutathione hydrolase (255 aa).

Residues His-55, His-57, Asp-59, His-60, His-111, Asp-131, and His-169 each contribute to the Zn(2+) site.

Belongs to the metallo-beta-lactamase superfamily. Glyoxalase II family. In terms of assembly, monomer. Zn(2+) is required as a cofactor.

It carries out the reaction an S-(2-hydroxyacyl)glutathione + H2O = a 2-hydroxy carboxylate + glutathione + H(+). It functions in the pathway secondary metabolite metabolism; methylglyoxal degradation; (R)-lactate from methylglyoxal: step 2/2. In terms of biological role, thiolesterase that catalyzes the hydrolysis of S-D-lactoyl-glutathione to form glutathione and D-lactic acid. The polypeptide is Hydroxyacylglutathione hydrolase (Chromohalobacter salexigens (strain ATCC BAA-138 / DSM 3043 / CIP 106854 / NCIMB 13768 / 1H11)).